The primary structure comprises 153 residues: MEPLYQAGSILMTVNTLQGKKMIESGLQSGDFSLSQSWPSCLPPPADLEILQQKVAGVQRELEDFKKEALKSIHYLEDAFCEMNGALVQQEEQAARVRQRLREEEDRGIVRNKVLTFLLPREKQLREHCKRLEDLLLDRGRDALRATKKSQAD.

Positions 46 to 109 (ADLEILQQKV…RLREEEDRGI (64 aa)) form a coiled coil.

This is Coiled-coil domain-containing protein 182 (CCDC182) from Homo sapiens (Human).